An 843-amino-acid polypeptide reads, in one-letter code: Protein P (843 aa).

A terminal protein domain (TP) region spans residues 1–177 (MPLSYQHFRK…FCGSPYSWEQ (177 aa)). A spacer region spans residues 178–346 (DLQHGRLVFQ…YCLCHIVNLI (169 aa)). Positions 220–265 (QSRLGPQPAQGQLAGRQQGGSGSIRARVHPSPWGTVGVEPSGSGPT) are disordered. Residues 223 to 235 (LGPQPAQGQLAGR) are compositionally biased toward low complexity. The interval 347–690 (EDWGPCTEHG…YLNLYPVARQ (344 aa)) is polymerase/reverse transcriptase domain (RT). Residues 357–600 (EHLIRTPRTP…YSLNFMGYVI (244 aa)) enclose the Reverse transcriptase domain. Mg(2+)-binding residues include D429, D551, and D552.

The protein belongs to the hepadnaviridae P protein family.

It catalyses the reaction DNA(n) + a 2'-deoxyribonucleoside 5'-triphosphate = DNA(n+1) + diphosphate. The enzyme catalyses Endonucleolytic cleavage to 5'-phosphomonoester.. Activated by host HSP70 and HSP40 in vitro to be able to bind the epsilon loop of the pgRNA. Because deletion of the RNase H region renders the protein partly chaperone-independent, the chaperones may be needed indirectly to relieve occlusion of the RNA-binding site by this domain. Inhibited by several reverse-transcriptase inhibitors: Lamivudine, Adefovir and Entecavir. Functionally, multifunctional enzyme that converts the viral RNA genome into dsDNA in viral cytoplasmic capsids. This enzyme displays a DNA polymerase activity that can copy either DNA or RNA templates, and a ribonuclease H (RNase H) activity that cleaves the RNA strand of RNA-DNA heteroduplexes in a partially processive 3'- to 5'-endonucleasic mode. Neo-synthesized pregenomic RNA (pgRNA) are encapsidated together with the P protein, and reverse-transcribed inside the nucleocapsid. Initiation of reverse-transcription occurs first by binding the epsilon loop on the pgRNA genome, and is initiated by protein priming, thereby the 5'-end of (-)DNA is covalently linked to P protein. Partial (+)DNA is synthesized from the (-)DNA template and generates the relaxed circular DNA (RC-DNA) genome. After budding and infection, the RC-DNA migrates in the nucleus, and is converted into a plasmid-like covalently closed circular DNA (cccDNA). The activity of P protein does not seem to be necessary for cccDNA generation, and is presumably released from (+)DNA by host nuclear DNA repair machinery. This chain is Protein P, found in Hepatitis B virus genotype B2 (isolate Vietnam/9873/1997) (HBV-B).